A 292-amino-acid polypeptide reads, in one-letter code: tRNA-cytidine(32) 2-sulfurtransferase (292 aa).

The PP-loop motif signature appears at 53 to 58; the sequence is SGGKDS. 3 residues coordinate [4Fe-4S] cluster: C128, C131, and C219.

Belongs to the TtcA family. Homodimer. Mg(2+) serves as cofactor. Requires [4Fe-4S] cluster as cofactor.

The protein localises to the cytoplasm. The catalysed reaction is cytidine(32) in tRNA + S-sulfanyl-L-cysteinyl-[cysteine desulfurase] + AH2 + ATP = 2-thiocytidine(32) in tRNA + L-cysteinyl-[cysteine desulfurase] + A + AMP + diphosphate + H(+). It functions in the pathway tRNA modification. Catalyzes the ATP-dependent 2-thiolation of cytidine in position 32 of tRNA, to form 2-thiocytidine (s(2)C32). The sulfur atoms are provided by the cysteine/cysteine desulfurase (IscS) system. This Cereibacter sphaeroides (strain ATCC 17023 / DSM 158 / JCM 6121 / CCUG 31486 / LMG 2827 / NBRC 12203 / NCIMB 8253 / ATH 2.4.1.) (Rhodobacter sphaeroides) protein is tRNA-cytidine(32) 2-sulfurtransferase.